The following is a 282-amino-acid chain: Succinate dehydrogenase [ubiquinone] iron-sulfur subunit, mitochondrial (282 aa).

The transit peptide at 1–21 directs the protein to the mitochondrion; it reads MLRGSTSVCRSLELVTQAARY. The 2Fe-2S ferredoxin-type domain maps to 39 to 129; that stretch reads EIYRFNPEEP…TTKIYPLPHM (91 aa). Residues Cys-89, Cys-94, Cys-97, and Cys-109 each coordinate [2Fe-2S] cluster. Residues 172–202 form the 4Fe-4S ferredoxin-type domain; sequence EQEKLDGLYECILCACCSASCPSYWWNADKY. Positions 182, 185, and 188 each coordinate [4Fe-4S] cluster. Cys-192 is a [3Fe-4S] cluster binding site. Trp-197 contributes to the a rhodoquinol binding site. Trp-197 serves as a coordination point for a ubiquinone. Residues Cys-239 and Cys-245 each coordinate [3Fe-4S] cluster. Cys-249 contacts [4Fe-4S] cluster.

This sequence belongs to the succinate dehydrogenase/fumarate reductase iron-sulfur protein family. In terms of assembly, component of the mitochondrial electron transport chain complex II composed of four subunits: a flavoprotein (Fp), an iron-sulfur protein (Ip), and a large cytochrome b (CybL) subunit and a small cytochrome b (CybS) subunit. There are 2 developmental stage-specific forms of complex II which have the Ip and CybL subunits in common. Complex II from the free-living larvae (aerobic environment) acts as a succinate dehydrogenase and is composed of the common subunit Ip and CybL and the stage specific subunits FpL and CybSL. Complex II from parasitic larvae and adults (anaerobic environment) acts as a fumarate reductase and is composed of the common subunit Ip and CybL and the stage specific subunits FpA and CybSA. The cofactor is [2Fe-2S] cluster. Requires [3Fe-4S] cluster as cofactor. [4Fe-4S] cluster serves as cofactor. Expressed in adult muscles (at protein level).

The protein localises to the mitochondrion inner membrane. It carries out the reaction a ubiquinone + succinate = a ubiquinol + fumarate. The catalysed reaction is a rhodoquinone + succinate = a rhodoquinol + fumarate. The protein operates within carbohydrate metabolism; tricarboxylic acid cycle; fumarate from succinate (eukaryal route): step 1/1. Inhibited by the fungicide flutolanil. Functionally, iron-sulfur protein (Ip) subunit of the mitochondrial electron transport chain complex II which, together with the flavoprotein (Fp) subunit forms the catalytic core of the complex. During the free-living egg-larvae stages, which occur in an aerobic environment, complex II acts as a succinate dehydrogenase by transferring electrons from succinate to ubiquinone. During the parasitic larvae and adult stages, which occur in an anaerobic environment, complex II acts as a fumarate reductase by transferring electrons from rhodoquinol to fumarate. The polypeptide is Succinate dehydrogenase [ubiquinone] iron-sulfur subunit, mitochondrial (Ascaris suum (Pig roundworm)).